Reading from the N-terminus, the 314-residue chain is MTAAVRPLPIIGPTGTGKSQLALDVAERLGPLGAEIVNADAMQLYRGMDIGTAKLPVDARRGIPHHQLDVLDVTQTATVARYQRAAAADIEAILAAGAVPIIVGGSMLYIQSLLDDWSFPATDPRVRARWERRLGEVGVGELHAELARRDPAAAAAILPTDARRTVRALEVIELTGRPFAASAPRIGAPRWDTVIIGLDCDTTLLDERLARRTDAMFEQGLVAEVTGLLGRGLRDGVTAARALGYAQVIAALDAGGGDEQLRQAREQTYAGTRRYVRRQRSWFRRDHRVRWLDAGACSPPRLADAALEAWRHVS.

12 to 19 (GPTGTGKS) is a binding site for ATP. 14-19 (TGTGKS) serves as a coordination point for substrate.

The protein belongs to the IPP transferase family. Monomer. Requires Mg(2+) as cofactor.

It carries out the reaction adenosine(37) in tRNA + dimethylallyl diphosphate = N(6)-dimethylallyladenosine(37) in tRNA + diphosphate. Functionally, catalyzes the transfer of a dimethylallyl group onto the adenine at position 37 in tRNAs that read codons beginning with uridine, leading to the formation of N6-(dimethylallyl)adenosine (i(6)A). The sequence is that of tRNA dimethylallyltransferase from Mycolicibacterium paratuberculosis (strain ATCC BAA-968 / K-10) (Mycobacterium paratuberculosis).